The following is a 187-amino-acid chain: Elongation factor P (187 aa).

The protein belongs to the elongation factor P family.

The protein localises to the cytoplasm. The protein operates within protein biosynthesis; polypeptide chain elongation. In terms of biological role, involved in peptide bond synthesis. Stimulates efficient translation and peptide-bond synthesis on native or reconstituted 70S ribosomes in vitro. Probably functions indirectly by altering the affinity of the ribosome for aminoacyl-tRNA, thus increasing their reactivity as acceptors for peptidyl transferase. In Chromobacterium violaceum (strain ATCC 12472 / DSM 30191 / JCM 1249 / CCUG 213 / NBRC 12614 / NCIMB 9131 / NCTC 9757 / MK), this protein is Elongation factor P.